The following is a 116-amino-acid chain: Subtilisin inhibitor-like protein 4 (116 aa).

Cystine bridges form between cysteine 38-cysteine 53 and cysteine 74-cysteine 104.

This sequence belongs to the protease inhibitor I16 (SSI) family. In terms of assembly, homodimer.

The protein resides in the secreted. Inhibitor of subtilisin BPN' and trypsin. The polypeptide is Subtilisin inhibitor-like protein 4 (Streptomyces lavendulae).